The primary structure comprises 295 residues: Bifunctional protein FolD (295 aa).

Residues 167 to 169, Ser192, and Ile233 contribute to the NADP(+) site; that span reads GRS.

Belongs to the tetrahydrofolate dehydrogenase/cyclohydrolase family. Homodimer.

The catalysed reaction is (6R)-5,10-methylene-5,6,7,8-tetrahydrofolate + NADP(+) = (6R)-5,10-methenyltetrahydrofolate + NADPH. It carries out the reaction (6R)-5,10-methenyltetrahydrofolate + H2O = (6R)-10-formyltetrahydrofolate + H(+). The protein operates within one-carbon metabolism; tetrahydrofolate interconversion. Functionally, catalyzes the oxidation of 5,10-methylenetetrahydrofolate to 5,10-methenyltetrahydrofolate and then the hydrolysis of 5,10-methenyltetrahydrofolate to 10-formyltetrahydrofolate. This chain is Bifunctional protein FolD, found in Paramagnetospirillum magneticum (strain ATCC 700264 / AMB-1) (Magnetospirillum magneticum).